We begin with the raw amino-acid sequence, 417 residues long: Pigment epithelium-derived factor (417 aa).

The signal sequence occupies residues 1–19 (MQALVLLLWTGALLGHGSS). A disordered region spans residues 17–41 (GSSQNVPSSSEGSPVPDSTGEPVEE). Residues 18 to 28 (SSQNVPSSSEG) show a composition bias toward polar residues. Pyrrolidone carboxylic acid is present on Q20. S24 is subject to Phosphoserine. N284 carries an N-linked (GlcNAc...) asparagine glycan.

The protein belongs to the serpin family. In terms of assembly, interacts with PNPLA2; this interaction stimulates the phospholipase A2 activity of PNPLA2. In terms of tissue distribution, highly expressed in the liver, gastric glandular mucosa and renal tubules. It is also expressed in the brain, heart, lung retina and testes.

It is found in the secreted. It localises to the melanosome. In terms of biological role, neurotrophic protein; induces extensive neuronal differentiation in retinoblastoma cells. Potent inhibitor of angiogenesis. As it does not undergo the S (stressed) to R (relaxed) conformational transition characteristic of active serpins, it exhibits no serine protease inhibitory activity. This Mus musculus (Mouse) protein is Pigment epithelium-derived factor (Serpinf1).